Here is a 425-residue protein sequence, read N- to C-terminus: MTAIIDIVGREILDSRGNPTVEVDVVLEDGSFGRAAVPSGASTGAHEAVELRDGGSRYLGKGVEKAVEVVNGKIFDAIAGMDAESQLLIDQTLIDLDGSANKGNLGANAILGVSLAVAKAAAQASGLPLYRYVGGTNAHVLPVPMMNIINGGAHADNPIDFQEFMILPVGATSIREAVRYGSEVFHTLKKRLKDAGHNTNVGDEGGFAPNLKNAQAALDFIMESIEKAGFKPGEDIALGLDCAATEFFKDGNYVYEGERKTRDPKAQAKYLAKLASDYPIVTIEDGMAEDDWEGWKYLTDLIGNKCQLVGDDLFVTNSARLRDGIRLGVANSILVKVNQIGSLSETLDAVETAHKAGYTAVMSHRSGETEDSTIADLAVATNCGQIKTGSLARSDRTAKYNQLIRIEEELDKQARYAGRSALKLL.

Gln-162 is a binding site for (2R)-2-phosphoglycerate. Glu-204 (proton donor) is an active-site residue. Mg(2+)-binding residues include Asp-241, Glu-284, and Asp-311. (2R)-2-phosphoglycerate is bound by residues Lys-336, Arg-365, Ser-366, and Lys-387. Lys-336 serves as the catalytic Proton acceptor.

This sequence belongs to the enolase family. Requires Mg(2+) as cofactor.

Its subcellular location is the cytoplasm. It localises to the secreted. It is found in the cell surface. The enzyme catalyses (2R)-2-phosphoglycerate = phosphoenolpyruvate + H2O. The protein operates within carbohydrate degradation; glycolysis; pyruvate from D-glyceraldehyde 3-phosphate: step 4/5. In terms of biological role, catalyzes the reversible conversion of 2-phosphoglycerate (2-PG) into phosphoenolpyruvate (PEP). It is essential for the degradation of carbohydrates via glycolysis. This Brucella melitensis biotype 2 (strain ATCC 23457) protein is Enolase.